A 337-amino-acid chain; its full sequence is Histidine N-acetyltransferase (337 aa).

A propeptide spans 1 to 2 (MK) (removed in mature form). The 137-residue stretch at 21–157 (LQFSVATEED…GILLMRFRAE (137 aa)) folds into the N-acetyltransferase domain.

Expressed exclusively in the brain and lens.

The enzyme catalyses L-histidine + acetyl-CoA = N(alpha)-acetyl-L-histidine + CoA + H(+). Functionally, enzyme responsible for the N-acetyl-histidine (NAH) synthesis, which is a major constituent of brain and lens of ectothermic vertebrates. The polypeptide is Histidine N-acetyltransferase (hisat) (Oreochromis niloticus (Nile tilapia)).